A 184-amino-acid polypeptide reads, in one-letter code: Dual-action ribosomal maturation protein DarP (184 aa).

The segment at 1-27 (MSIPDTEIPVDDDGYDENGYDRPSKSQ) is disordered. The span at 8-18 (IPVDDDGYDEN) shows a compositional bias: acidic residues.

This sequence belongs to the DarP family.

The protein resides in the cytoplasm. In terms of biological role, member of a network of 50S ribosomal subunit biogenesis factors which assembles along the 30S-50S interface, preventing incorrect 23S rRNA structures from forming. Promotes peptidyl transferase center (PTC) maturation. The polypeptide is Dual-action ribosomal maturation protein DarP (Bordetella avium (strain 197N)).